A 334-amino-acid chain; its full sequence is Cytoskeleton protein RodZ (334 aa).

At 1–111 (MNTEATHDQN…LGKRRKKRDG (111 aa)) the chain is on the cytoplasmic side. Positions 19–71 (LRNAREQLGLSQQAVAERLCLKVSTVRDIEEDKAPSDLASTFLRGYIRSYARL) constitute an HTH cro/C1-type domain. The H-T-H motif DNA-binding region spans 30-49 (QQAVAERLCLKVSTVRDIEE). A helical; Signal-anchor for type II membrane protein membrane pass occupies residues 112–132 (WLMSFTWLVLFVVVGLTGAWW). The Periplasmic portion of the chain corresponds to 133-334 (WQNHKAQQEE…TLNAEPTPAQ (202 aa)). A disordered region spans residues 155–241 (NADKDSGQSV…PSALPTSQAG (87 aa)). Residues 161 to 175 (GQSVPLDTGAVTSQD) show a composition bias toward polar residues. 2 stretches are compositionally biased toward low complexity: residues 176–211 (TTPA…TVVA) and 219–241 (TAAT…SQAG).

It belongs to the RodZ family.

It is found in the cell inner membrane. Cytoskeletal protein that is involved in cell-shape control through regulation of the length of the long axis. This Salmonella dublin (strain CT_02021853) protein is Cytoskeleton protein RodZ.